The following is a 463-amino-acid chain: Chromosomal replication initiator protein DnaA (463 aa).

Residues 1–83 (MNTNQIILTD…LQLFQHYNNT (83 aa)) are domain I, interacts with DnaA modulators. The interval 83 to 124 (TIKSIDIITKELPGTTQTVIELPTKTFADIGSSELNSENIFS) is domain II. Residues 125 to 343 (TLDVRFTFDN…GALNKVIAHS (219 aa)) are domain III, AAA+ region. ATP contacts are provided by glycine 171, glycine 173, lysine 174, and threonine 175. A domain IV, binds dsDNA region spans residues 344-463 (NFTLKEITLE…INLLMKILQH (120 aa)).

Belongs to the DnaA family. Oligomerizes as a right-handed, spiral filament on DNA at oriC.

Its subcellular location is the cytoplasm. In terms of biological role, plays an essential role in the initiation and regulation of chromosomal replication. ATP-DnaA binds to the origin of replication (oriC) to initiate formation of the DNA replication initiation complex once per cell cycle. Binds the DnaA box (a 9 base pair repeat at the origin) and separates the double-stranded (ds)DNA. Forms a right-handed helical filament on oriC DNA; dsDNA binds to the exterior of the filament while single-stranded (ss)DNA is stabiized in the filament's interior. The ATP-DnaA-oriC complex binds and stabilizes one strand of the AT-rich DNA unwinding element (DUE), permitting loading of DNA polymerase. After initiation quickly degrades to an ADP-DnaA complex that is not apt for DNA replication. Binds acidic phospholipids. The polypeptide is Chromosomal replication initiator protein DnaA (Rickettsia akari (strain Hartford)).